The chain runs to 346 residues: Holliday junction branch migration complex subunit RuvB (346 aa).

The interval 1–182 (MSEPARLISP…FGIPVRLSFY (182 aa)) is large ATPase domain (RuvB-L). ATP-binding positions include leucine 21, arginine 22, glycine 63, lysine 66, threonine 67, threonine 68, 129–131 (EDF), arginine 172, tyrosine 182, and arginine 219. Mg(2+) is bound at residue threonine 67. A small ATPAse domain (RuvB-S) region spans residues 183 to 253 (TVEELELIVR…IADEALTRLL (71 aa)). The tract at residues 256–346 (NVGFDQLDKR…AQFRLFQEDN (91 aa)) is head domain (RuvB-H). Residues arginine 292, arginine 311, and arginine 316 each contribute to the DNA site.

It belongs to the RuvB family. In terms of assembly, homohexamer. Forms an RuvA(8)-RuvB(12)-Holliday junction (HJ) complex. HJ DNA is sandwiched between 2 RuvA tetramers; dsDNA enters through RuvA and exits via RuvB. An RuvB hexamer assembles on each DNA strand where it exits the tetramer. Each RuvB hexamer is contacted by two RuvA subunits (via domain III) on 2 adjacent RuvB subunits; this complex drives branch migration. In the full resolvosome a probable DNA-RuvA(4)-RuvB(12)-RuvC(2) complex forms which resolves the HJ.

The protein resides in the cytoplasm. It carries out the reaction ATP + H2O = ADP + phosphate + H(+). Functionally, the RuvA-RuvB-RuvC complex processes Holliday junction (HJ) DNA during genetic recombination and DNA repair, while the RuvA-RuvB complex plays an important role in the rescue of blocked DNA replication forks via replication fork reversal (RFR). RuvA specifically binds to HJ cruciform DNA, conferring on it an open structure. The RuvB hexamer acts as an ATP-dependent pump, pulling dsDNA into and through the RuvAB complex. RuvB forms 2 homohexamers on either side of HJ DNA bound by 1 or 2 RuvA tetramers; 4 subunits per hexamer contact DNA at a time. Coordinated motions by a converter formed by DNA-disengaged RuvB subunits stimulates ATP hydrolysis and nucleotide exchange. Immobilization of the converter enables RuvB to convert the ATP-contained energy into a lever motion, pulling 2 nucleotides of DNA out of the RuvA tetramer per ATP hydrolyzed, thus driving DNA branch migration. The RuvB motors rotate together with the DNA substrate, which together with the progressing nucleotide cycle form the mechanistic basis for DNA recombination by continuous HJ branch migration. Branch migration allows RuvC to scan DNA until it finds its consensus sequence, where it cleaves and resolves cruciform DNA. The polypeptide is Holliday junction branch migration complex subunit RuvB (Rhizobium leguminosarum bv. trifolii (strain WSM2304)).